The following is a 570-amino-acid chain: Urease subunit alpha (570 aa).

The Urease domain maps to 131 to 570; the sequence is GGMDSHIHFI…LPMAQRYFLF (440 aa). Ni(2+)-binding residues include His-136, His-138, and Lys-219. N6-carboxylysine is present on Lys-219. His-221 is a substrate binding site. Positions 248 and 274 each coordinate Ni(2+). The active-site Proton donor is His-322. Position 362 (Asp-362) interacts with Ni(2+).

This sequence belongs to the metallo-dependent hydrolases superfamily. Urease alpha subunit family. As to quaternary structure, heterotrimer of UreA (gamma), UreB (beta) and UreC (alpha) subunits. Three heterotrimers associate to form the active enzyme. Ni cation serves as cofactor. Post-translationally, carboxylation allows a single lysine to coordinate two nickel ions.

The protein localises to the cytoplasm. It catalyses the reaction urea + 2 H2O + H(+) = hydrogencarbonate + 2 NH4(+). The protein operates within nitrogen metabolism; urea degradation; CO(2) and NH(3) from urea (urease route): step 1/1. This chain is Urease subunit alpha, found in Rhizobium leguminosarum bv. trifolii (strain WSM2304).